A 284-amino-acid chain; its full sequence is Bifunctional protein FolD (284 aa).

NADP(+) is bound by residues 165–167 (GRS), Ser-190, and Val-231.

Belongs to the tetrahydrofolate dehydrogenase/cyclohydrolase family. In terms of assembly, homodimer.

The enzyme catalyses (6R)-5,10-methylene-5,6,7,8-tetrahydrofolate + NADP(+) = (6R)-5,10-methenyltetrahydrofolate + NADPH. The catalysed reaction is (6R)-5,10-methenyltetrahydrofolate + H2O = (6R)-10-formyltetrahydrofolate + H(+). Its pathway is one-carbon metabolism; tetrahydrofolate interconversion. Its function is as follows. Catalyzes the oxidation of 5,10-methylenetetrahydrofolate to 5,10-methenyltetrahydrofolate and then the hydrolysis of 5,10-methenyltetrahydrofolate to 10-formyltetrahydrofolate. This Brevibacillus brevis (strain 47 / JCM 6285 / NBRC 100599) protein is Bifunctional protein FolD.